We begin with the raw amino-acid sequence, 451 residues long: Phosphoglucosamine mutase (451 aa).

S101 (phosphoserine intermediate) is an active-site residue. Mg(2+) contacts are provided by S101, D240, D242, and D244. S101 carries the post-translational modification Phosphoserine.

It belongs to the phosphohexose mutase family. Requires Mg(2+) as cofactor. In terms of processing, activated by phosphorylation.

The enzyme catalyses alpha-D-glucosamine 1-phosphate = D-glucosamine 6-phosphate. Catalyzes the conversion of glucosamine-6-phosphate to glucosamine-1-phosphate. The protein is Phosphoglucosamine mutase of Thioalkalivibrio sulfidiphilus (strain HL-EbGR7).